The chain runs to 378 residues: MGLFLNKIVIPGYFSHLRSMVGSLSRGISRKATLEYYAQVADEETAKAVDGWTCKSEAEKSVALFEEISFLVHKIIVRCLMGQDFYDHHVRELYDLLRTMEANVGSIWHTVLPGWVAHGPARRLWRCRQRVQEIFDFRLRERERSPEEWKKRLDYISYTLQDPATAHLSRFYGAHHTLLMFAAHTSTVASISWILLEWKSPHRLQRLREELATHALEQSPFLDALVKETGRHYSGNSDVRWARKPKTLRTEVASVPESRITIPEGTIVSISPYLTHHDPATWDNADTYLPERWLADPDLAKKMNEGGQLRYIPFGAGSHRCPGEKMAILIAKIAVARIVQSCDLAWGEGSSENTLGGLDFSKVGSPWLKGDVQVRFQV.

Cys321 serves as a coordination point for heme.

Belongs to the cytochrome P450 family. It depends on heme as a cofactor.

The protein operates within secondary metabolite biosynthesis. Functionally, cytochrome P450 monooxygenase pytD; part of the gene cluster that mediates the biosynthesis of pyranterreones, a family of antioxidative compounds. The first step of pyranonigrins biosynthesis is performed by the hybrid PKS-NRPS synthetase pytA that condenses 4 malonyl-CoA units ato the acetyl starter unit by the modular PKS of pytA. The acyl chain is then connected to an L-serine through the amide bond by the modular NRPS of pytA. A tetramic acid is formed and released from the PKS-NRPS pytA to give pyranterreone 5 with the help of the thioesterase pytI. Pyranterreone 5 could be methylated by pytC to afford pyranterreone 6. Both pyranterreones 5 and 6 are subsequently oxidized by the FAD-linked oxidoreductase pytB and the cytochrome P450 monooxygenase pytD to form the fused gamma-pyrone core, resulting in pyranterreones 7 and 11, respectively. The hydroxy group at C-8 of pyranterreones 7 and 11 are dehydrated by the aspartyl protease pytH to form a delta-7 double bond to give pyranterreones 3 and 1, 2 accordingly. The exo-methylene of pyranterreone 3 could be reduced into a pendant methyl by reductase pytE to provide pyranterreone 4, also known as cordylactam. Pyranterreone 4 can be reconverted to pyranterreone 3 through pytB-catalyzed dehydrogenation or further oxidized to pyranterreones 9 and 10. This Aspergillus terreus (strain NIH 2624 / FGSC A1156) protein is Cytochrome P450 monooxygenase pytD.